The chain runs to 294 residues: NAD kinase (294 aa).

Asp74 acts as the Proton acceptor in catalysis. NAD(+) contacts are provided by residues 74-75 (DG), 148-149 (NE), His159, Arg176, Asp178, 189-194 (TAYSLS), and Gln249.

The protein belongs to the NAD kinase family. A divalent metal cation is required as a cofactor.

The protein localises to the cytoplasm. The catalysed reaction is NAD(+) + ATP = ADP + NADP(+) + H(+). Involved in the regulation of the intracellular balance of NAD and NADP, and is a key enzyme in the biosynthesis of NADP. Catalyzes specifically the phosphorylation on 2'-hydroxyl of the adenosine moiety of NAD to yield NADP. The polypeptide is NAD kinase (Vibrio vulnificus (strain CMCP6)).